We begin with the raw amino-acid sequence, 780 residues long: Aconitate hydratase, mitochondrial (780 aa).

The transit peptide at 1–27 directs the protein to the mitochondrion; that stretch reads MAPYSLLVSRLQKALGARQYHVASVLC. Lysine 31 carries the N6-succinyllysine modification. At lysine 50 the chain carries N6-acetyllysine; alternate. At lysine 50 the chain carries N6-succinyllysine; alternate. Glutamine 99 contacts substrate. N6-acetyllysine; alternate is present on residues lysine 138 and lysine 144. N6-succinyllysine; alternate occurs at positions 138 and 144. Residue 192 to 194 coordinates substrate; that stretch reads DSH. N6-acetyllysine; alternate is present on lysine 233. At lysine 233 the chain carries N6-succinyllysine; alternate. Cysteine 385 provides a ligand contact to [4Fe-4S] cluster. Lysine 411 is modified (N6-succinyllysine). Residues cysteine 448 and cysteine 451 each contribute to the [4Fe-4S] cluster site. Substrate is bound by residues arginine 474 and arginine 479. 2 positions are modified to N6-acetyllysine; alternate: lysine 517 and lysine 523. N6-succinyllysine; alternate is present on residues lysine 517 and lysine 523. The span at 524–537 shows a compositional bias: basic and acidic residues; it reads LEAPDADELPRAEF. The disordered stretch occupies residues 524 to 560; it reads LEAPDADELPRAEFDPGQDTYQHPPKDSSGQQVDVSP. N6-succinyllysine is present on lysine 549. Over residues 551-560 the composition is skewed to polar residues; the sequence is SSGQQVDVSP. Phosphoserine is present on serine 559. An N6-acetyllysine; alternate modification is found at lysine 573. Lysine 573 is modified (N6-succinyllysine; alternate). Lysine 591 carries the N6-succinyllysine modification. An N6-acetyllysine; alternate modification is found at lysine 605. Lysine 605 carries the post-translational modification N6-succinyllysine; alternate. Arginine 607 contributes to the substrate binding site. Position 628 is an N6-succinyllysine (lysine 628). A Phosphoserine modification is found at serine 670. Residue 670–671 coordinates substrate; the sequence is SR. Residue lysine 689 is modified to N6-succinyllysine. Residues lysine 723 and lysine 730 each carry the N6-acetyllysine; alternate modification. Lysine 723 and lysine 730 each carry N6-succinyllysine; alternate. Residues lysine 736 and lysine 743 each carry the N6-acetyllysine modification.

It belongs to the aconitase/IPM isomerase family. As to quaternary structure, monomer. Requires [4Fe-4S] cluster as cofactor. Post-translationally, forms covalent cross-links mediated by transglutaminase TGM2, between a glutamine and the epsilon-amino group of a lysine residue, forming homopolymers and heteropolymers.

The protein localises to the mitochondrion. The catalysed reaction is citrate = D-threo-isocitrate. It functions in the pathway carbohydrate metabolism; tricarboxylic acid cycle; isocitrate from oxaloacetate: step 2/2. Functionally, catalyzes the isomerization of citrate to isocitrate via cis-aconitate. The polypeptide is Aconitate hydratase, mitochondrial (ACO2) (Bos taurus (Bovine)).